Here is a 63-residue protein sequence, read N- to C-terminus: Large ribosomal subunit protein bL28 (63 aa).

The protein belongs to the bacterial ribosomal protein bL28 family.

This chain is Large ribosomal subunit protein bL28, found in Coprothermobacter proteolyticus (strain ATCC 35245 / DSM 5265 / OCM 4 / BT).